The primary structure comprises 112 residues: Nucleoid-associated protein FTN_1196 (112 aa).

The segment at 1–27 is disordered; sequence MNFDMSKLMQQAQKMQEQMKKAQQERE. A compositionally biased stretch (basic and acidic residues) spans 17–27; that stretch reads EQMKKAQQERE.

It belongs to the YbaB/EbfC family. In terms of assembly, homodimer.

Its subcellular location is the cytoplasm. The protein resides in the nucleoid. Its function is as follows. Binds to DNA and alters its conformation. May be involved in regulation of gene expression, nucleoid organization and DNA protection. This chain is Nucleoid-associated protein FTN_1196, found in Francisella tularensis subsp. novicida (strain U112).